The primary structure comprises 514 residues: UDP-N-acetylmuramoyl-L-alanyl-D-glutamate--2,6-diaminopimelate ligase (514 aa).

Thr37 provides a ligand contact to UDP-N-acetyl-alpha-D-muramoyl-L-alanyl-D-glutamate. 125 to 131 (GTNGKTS) contacts ATP. UDP-N-acetyl-alpha-D-muramoyl-L-alanyl-D-glutamate-binding positions include 167–168 (TT), Ser194, Gln200, and Arg202. Lys234 carries the N6-carboxylysine modification. Meso-2,6-diaminopimelate-binding positions include Arg406, 430 to 433 (DNPR), Gly481, and Glu485. Positions 430–433 (DNPR) match the Meso-diaminopimelate recognition motif motif.

It belongs to the MurCDEF family. MurE subfamily. Requires Mg(2+) as cofactor. In terms of processing, carboxylation is probably crucial for Mg(2+) binding and, consequently, for the gamma-phosphate positioning of ATP.

It localises to the cytoplasm. The catalysed reaction is UDP-N-acetyl-alpha-D-muramoyl-L-alanyl-D-glutamate + meso-2,6-diaminopimelate + ATP = UDP-N-acetyl-alpha-D-muramoyl-L-alanyl-gamma-D-glutamyl-meso-2,6-diaminopimelate + ADP + phosphate + H(+). Its pathway is cell wall biogenesis; peptidoglycan biosynthesis. Its function is as follows. Catalyzes the addition of meso-diaminopimelic acid to the nucleotide precursor UDP-N-acetylmuramoyl-L-alanyl-D-glutamate (UMAG) in the biosynthesis of bacterial cell-wall peptidoglycan. The sequence is that of UDP-N-acetylmuramoyl-L-alanyl-D-glutamate--2,6-diaminopimelate ligase from Ralstonia nicotianae (strain ATCC BAA-1114 / GMI1000) (Ralstonia solanacearum).